The primary structure comprises 317 residues: Melanocyte-stimulating hormone receptor (317 aa).

At 1 to 37 (MPMQGAQKRLLGSLNSTPTATPNLGLAANHTGAPCLE) the chain is on the extracellular side. Asn29 carries an N-linked (GlcNAc...) asparagine glycan. A helical transmembrane segment spans residues 38-63 (VSIPDGLFLSLGLVSLVENVLVVAAI). The Cytoplasmic segment spans residues 64-72 (AKNRNLHSP). The helical transmembrane segment at 73–93 (MYCFICCLALSDLLVSSSNML) threads the bilayer. Residues 94–118 (ETAVILLLEAGALATRASVVQQLQN) lie on the Extracellular side of the membrane. Residues 119 to 140 (TIDVLTCSSMLCSLCFLGAIAV) form a helical membrane-spanning segment. The Cytoplasmic portion of the chain corresponds to 141–163 (DRHVSIFYALRYHSIMTLARARR). The chain crosses the membrane as a helical span at residues 164 to 183 (AIAAIWVASVLSSTLFIAYC). Topologically, residues 184–191 (DHAXVLLC) are extracellular. Residues 192 to 211 (LVVFFLAMLVLMAVLYVHML) form a helical membrane-spanning segment. Over 212-240 (ARACQHAQGITRLHQRQPPAHQGFGFRGA) the chain is Cytoplasmic. The chain crosses the membrane as a helical span at residues 241–266 (ATLTILLGIFFLCWGPFFLHLTLVVL). The Extracellular segment spans residues 267–279 (CPQHLTCSCIFKN). The chain crosses the membrane as a helical span at residues 280 to 300 (FKVFLTLIICSTIIDPLIYAF). Residues 301 to 317 (RSQELRRTLKELLLCSW) lie on the Cytoplasmic side of the membrane. Residue Cys315 is the site of S-palmitoyl cysteine attachment.

Belongs to the G-protein coupled receptor 1 family. In terms of assembly, interacts with MGRN1, but does not undergo MGRN1-mediated ubiquitination; this interaction competes with GNAS-binding and thus inhibits agonist-induced cAMP production. Interacts with OPN3; the interaction results in a decrease in MC1R-mediated cAMP signaling and ultimately a decrease in melanin production in melanocytes.

The protein resides in the cell membrane. In terms of biological role, receptor for MSH (alpha, beta and gamma) and ACTH. The activity of this receptor is mediated by G proteins which activate adenylate cyclase. Mediates melanogenesis, the production of eumelanin (black/brown) and phaeomelanin (red/yellow), via regulation of cAMP signaling in melanocytes. This Ateles paniscus (Black spider monkey) protein is Melanocyte-stimulating hormone receptor (MC1R).